Reading from the N-terminus, the 85-residue chain is Neurotoxin beta-KTx 17 (85 aa).

A signal peptide spans 1–20 (MKQYIFFLALIVLVSTFAEA). A propeptide spanning residues 21–37 (GKKTEILDKVKKVFSKG) is cleaved from the precursor. The BetaSPN-type CS-alpha/beta domain occupies 49–85 (ELGCPFIEKWCEDHCESKKQVGKCENFDCSCVKLGGK). Disulfide bonds link Cys52-Cys72, Cys59-Cys77, and Cys63-Cys79.

This sequence belongs to the long chain scorpion toxin family. Class 2 subfamily. As to expression, expressed by the venom gland.

The protein localises to the secreted. Has a very weak effect to block voltage-gated potassium channel Kv1.1/KCNA1. In Lychas mucronatus (Chinese swimming scorpion), this protein is Neurotoxin beta-KTx 17.